Here is a 229-residue protein sequence, read N- to C-terminus: MPILKNDWAPLLEEEFQKPYYLKLREFLKEEYRTRTIYPDMHDIFNALHYTPYANVKVVLLGQDPYHGPGQAHGLSFSVKPGVPVPPSLANIFKELHDDLGCYIPDNGYLVKWAEQGVLLLNTVLTVRRGQANSHRGKGWEYFTDRVIELVNEKDDPVVFLLWGRNAQEKKERITNPRHLIIEAPHPSPFSAARGFFGHRPFSRTNAFLTKHGREPIDWQIENIGARAE.

The active-site Proton acceptor is Asp64.

Belongs to the uracil-DNA glycosylase (UDG) superfamily. UNG family.

The protein resides in the cytoplasm. It carries out the reaction Hydrolyzes single-stranded DNA or mismatched double-stranded DNA and polynucleotides, releasing free uracil.. Excises uracil residues from the DNA which can arise as a result of misincorporation of dUMP residues by DNA polymerase or due to deamination of cytosine. The protein is Uracil-DNA glycosylase of Geobacillus kaustophilus (strain HTA426).